The primary structure comprises 265 residues: Indole-3-glycerol phosphate synthase (265 aa).

It belongs to the TrpC family.

It carries out the reaction 1-(2-carboxyphenylamino)-1-deoxy-D-ribulose 5-phosphate + H(+) = (1S,2R)-1-C-(indol-3-yl)glycerol 3-phosphate + CO2 + H2O. It functions in the pathway amino-acid biosynthesis; L-tryptophan biosynthesis; L-tryptophan from chorismate: step 4/5. The protein is Indole-3-glycerol phosphate synthase of Xanthomonas oryzae pv. oryzae (strain PXO99A).